A 493-amino-acid chain; its full sequence is Glutamyl-tRNA(Gln) amidotransferase subunit A (493 aa).

Residues K78 and S158 each act as charge relay system in the active site. S182 functions as the Acyl-ester intermediate in the catalytic mechanism.

The protein belongs to the amidase family. GatA subfamily. Heterotrimer of A, B and C subunits.

The catalysed reaction is L-glutamyl-tRNA(Gln) + L-glutamine + ATP + H2O = L-glutaminyl-tRNA(Gln) + L-glutamate + ADP + phosphate + H(+). Its function is as follows. Allows the formation of correctly charged Gln-tRNA(Gln) through the transamidation of misacylated Glu-tRNA(Gln) in organisms which lack glutaminyl-tRNA synthetase. The reaction takes place in the presence of glutamine and ATP through an activated gamma-phospho-Glu-tRNA(Gln). This is Glutamyl-tRNA(Gln) amidotransferase subunit A from Beijerinckia indica subsp. indica (strain ATCC 9039 / DSM 1715 / NCIMB 8712).